We begin with the raw amino-acid sequence, 315 residues long: PIH1 domain-containing protein 2 (315 aa).

Belongs to the PIH1 family.

In Bos taurus (Bovine), this protein is PIH1 domain-containing protein 2 (PIH1D2).